The primary structure comprises 240 residues: Lipoprotein-releasing system ATP-binding protein LolD (240 aa).

In terms of domain architecture, ABC transporter spans 15 to 240; sequence IRAERLGKTY…GLRELTSAEV (226 aa). Position 51 to 58 (51 to 58) interacts with ATP; the sequence is GASGAGKS.

It belongs to the ABC transporter superfamily. Lipoprotein translocase (TC 3.A.1.125) family. In terms of assembly, the complex is composed of two ATP-binding proteins (LolD) and two transmembrane proteins (LolC and LolE).

The protein resides in the cell inner membrane. Functionally, part of the ABC transporter complex LolCDE involved in the translocation of mature outer membrane-directed lipoproteins, from the inner membrane to the periplasmic chaperone, LolA. Responsible for the formation of the LolA-lipoprotein complex in an ATP-dependent manner. This is Lipoprotein-releasing system ATP-binding protein LolD from Xylella fastidiosa (strain 9a5c).